The chain runs to 534 residues: Peptide chain release factor 3 (534 aa).

The tr-type G domain maps to 9-278 (ARRRTFAIIS…FFVEHAPSPQ (270 aa)). Residues 18-25 (SHPDAGKT), 86-90 (DTPGH), and 140-143 (NKLD) contribute to the GTP site.

It belongs to the TRAFAC class translation factor GTPase superfamily. Classic translation factor GTPase family. PrfC subfamily.

The protein resides in the cytoplasm. Its function is as follows. Increases the formation of ribosomal termination complexes and stimulates activities of RF-1 and RF-2. It binds guanine nucleotides and has strong preference for UGA stop codons. It may interact directly with the ribosome. The stimulation of RF-1 and RF-2 is significantly reduced by GTP and GDP, but not by GMP. The polypeptide is Peptide chain release factor 3 (Xylella fastidiosa (strain M23)).